A 325-amino-acid chain; its full sequence is Probable flavonol synthase 5 (325 aa).

The interval 1 to 21 (MEEERDHNASESSLPSLSKQL) is disordered. The segment covering 10 to 21 (SESSLPSLSKQL) has biased composition (polar residues). The Fe2OG dioxygenase domain maps to 180–280 (TAEYVLRVNF…RISWPVFVAP (101 aa)). Residue 188–190 (NFY) participates in 2-oxoglutarate binding. The Fe cation site is built by His205, Asp207, and His261. 271–273 (RIS) is a 2-oxoglutarate binding site.

It belongs to the iron/ascorbate-dependent oxidoreductase family. It depends on Fe(2+) as a cofactor. As to expression, expressed in young seedlings.

It carries out the reaction a (2R,3R)-dihydroflavonol + 2-oxoglutarate + O2 = a flavonol + succinate + CO2 + H2O. It participates in secondary metabolite biosynthesis; flavonoid biosynthesis. In Arabidopsis thaliana (Mouse-ear cress), this protein is Probable flavonol synthase 5 (FLS5).